Reading from the N-terminus, the 331-residue chain is Smad-related protein daf-14 (331 aa).

The MH2 domain maps to 134–331 (WCTIFYYELT…NERPEIGSRS (198 aa)). Residues 168–187 (ECRMSLTSQPSSRNSKSSQI) form a disordered region. Low complexity predominate over residues 175–185 (SQPSSRNSKSS).

Interacts with R-SMAD daf-8 and co-SMAD daf-3. Interacts with daf-3 in a daf-8 dependent manner.

In terms of biological role, probably an atypical receptor-regulated SMAD (R-SMAD) that is an intracellular signal transducer and transcriptional modulator activated by TGF-beta-like daf-7 signaling. Plays a role in TGF-beta-like daf-7 signaling in regulating entry into a developmentally arrested larval state known as dauer, in response to harsh environmental conditions; partially redundant with R-SMAD daf-8. In Caenorhabditis elegans, this protein is Smad-related protein daf-14.